The following is a 445-amino-acid chain: Exodeoxyribonuclease 7 large subunit (445 aa).

It belongs to the XseA family. In terms of assembly, heterooligomer composed of large and small subunits.

It is found in the cytoplasm. The catalysed reaction is Exonucleolytic cleavage in either 5'- to 3'- or 3'- to 5'-direction to yield nucleoside 5'-phosphates.. Its function is as follows. Bidirectionally degrades single-stranded DNA into large acid-insoluble oligonucleotides, which are then degraded further into small acid-soluble oligonucleotides. This Staphylococcus epidermidis (strain ATCC 35984 / DSM 28319 / BCRC 17069 / CCUG 31568 / BM 3577 / RP62A) protein is Exodeoxyribonuclease 7 large subunit.